Reading from the N-terminus, the 224-residue chain is Ribonuclease T (224 aa).

One can recognise an Exonuclease domain in the interval 32–206 (VVVDVETGGF…YDTEKTAELF (175 aa)). Residues aspartate 35, glutamate 37, histidine 193, and aspartate 198 each coordinate Mg(2+). Histidine 193 serves as the catalytic Proton donor/acceptor.

Belongs to the RNase T family. In terms of assembly, homodimer. Requires Mg(2+) as cofactor.

Its function is as follows. Trims short 3' overhangs of a variety of RNA species, leaving a one or two nucleotide 3' overhang. Responsible for the end-turnover of tRNA: specifically removes the terminal AMP residue from uncharged tRNA (tRNA-C-C-A). Also appears to be involved in tRNA biosynthesis. In Pseudomonas aeruginosa (strain UCBPP-PA14), this protein is Ribonuclease T.